Here is a 65-residue protein sequence, read N- to C-terminus: Large ribosomal subunit protein bL35 (65 aa).

The interval 1–26 is disordered; the sequence is MPKMKTHRGAAKRFKKTGSGKLKRAK.

The protein belongs to the bacterial ribosomal protein bL35 family.

In Clostridium novyi (strain NT), this protein is Large ribosomal subunit protein bL35.